The following is a 522-amino-acid chain: Response regulator mcs4 (522 aa).

The interval 148–274 is disordered; it reads DSLESPVSAP…RSISHSSLYT (127 aa). Residues 174-194 show a composition bias toward polar residues; the sequence is NLRNASRTRSHQTLPSSNVNK. Residues 244–255 are compositionally biased toward basic and acidic residues; sequence RSDESTAEKLAK. Residues 260-274 are compositionally biased toward polar residues; that stretch reads TPTNSRSISHSSLYT. One can recognise a Response regulatory domain in the interval 363–505; that stretch reads NVLIVEDNII…WLEKKITEWG (143 aa). Residue aspartate 412 is modified to 4-aspartylphosphate.

The protein localises to the cytoplasm. In terms of biological role, response regulator that coordinately controls the stress activated wak1-wis1-sty1 MAP kinase pathway and fission yeast cell cycle. This is Response regulator mcs4 (mcs4) from Schizosaccharomyces pombe (strain 972 / ATCC 24843) (Fission yeast).